The chain runs to 148 residues: Flavodoxin (148 aa).

The Flavodoxin-like domain occupies 4-145 (ALIVYGSTTG…DIVGWAHDVR (142 aa)).

This sequence belongs to the flavodoxin family. FMN serves as cofactor.

Functionally, low-potential electron donor to a number of redox enzymes. In Nitratidesulfovibrio vulgaris (strain ATCC 29579 / DSM 644 / CCUG 34227 / NCIMB 8303 / VKM B-1760 / Hildenborough) (Desulfovibrio vulgaris), this protein is Flavodoxin.